The sequence spans 301 residues: Inosose dehydratase (301 aa).

It belongs to the IolE/MocC family. Glutathione serves as cofactor. Co(2+) is required as a cofactor. Requires Mn(2+) as cofactor.

It catalyses the reaction scyllo-inosose = 3D-3,5/4-trihydroxycyclohexane-1,2-dione + H2O. Functionally, catalyzes the dehydration of inosose (2-keto-myo-inositol, 2KMI or 2,4,6/3,5-pentahydroxycyclohexanone) to 3D-(3,5/4)-trihydroxycyclohexane-1,2-dione (D-2,3-diketo-4-deoxy-epi-inositol). The protein is Inosose dehydratase of Salmonella typhimurium (strain LT2 / SGSC1412 / ATCC 700720).